A 955-amino-acid polypeptide reads, in one-letter code: Auxin response factor 11 (955 aa).

Residues 143 to 245 constitute a DNA-binding region (TF-B3); the sequence is FCKNLTASDT…QLLLGVRRAT (103 aa). Residues 518–543 show a composition bias toward polar residues; it reads ESKLNATSRDPRNTDSYTSRSTSEQN. Disordered stretches follow at residues 518–573 and 609–646; these read ESKL…LSSA and TQGNFVGQPHGHQVEQKGVLSPPKVESSKSPDGGKSVN. Basic residues predominate over residues 551-560; sequence KTRRSKKGLP. One can recognise a PB1 domain in the interval 852-936; sequence RTYTKVQKQG…RCIRILSPSE (85 aa).

The protein belongs to the ARF family. Homodimers and heterodimers.

The protein localises to the nucleus. Functionally, auxin response factors (ARFs) are transcriptional factors that bind specifically to the DNA sequence 5'-TGTCTC-3' found in the auxin-responsive promoter elements (AuxREs). The protein is Auxin response factor 11 (ARF11) of Oryza sativa subsp. indica (Rice).